Consider the following 502-residue polypeptide: C2H2-type transcription factor MSN2 (502 aa).

C2H2-type zinc fingers lie at residues 385–408 (FVCHLCTRRFRRQEHLKRHFRSLH) and 414–436 (FACGECGKKFSRSDNLTQHSRIH).

It is found in the nucleus. Key downstream transcription factor in the HOG1-MAPK pathway. Plays crucial roles in the regulation of growth, conidiation, trap development and fatty acid metabolism. Negatively regulates secondary metabolism such as arthrobotrisins biosynthesis.Also regulates autophagy and endocytosis. This chain is C2H2-type transcription factor MSN2, found in Arthrobotrys oligospora (strain ATCC 24927 / CBS 115.81 / DSM 1491) (Nematode-trapping fungus).